Consider the following 221-residue polypeptide: Orotidine 5'-phosphate decarboxylase (221 aa).

Residues aspartate 12, lysine 34, 60–69 (DFKVADIPNT), serine 117, 170–180 (PGVGAQGGKAS), glycine 193, and arginine 194 contribute to the substrate site. Lysine 62 acts as the Proton donor in catalysis.

This sequence belongs to the OMP decarboxylase family. Type 1 subfamily. As to quaternary structure, homodimer.

It catalyses the reaction orotidine 5'-phosphate + H(+) = UMP + CO2. The protein operates within pyrimidine metabolism; UMP biosynthesis via de novo pathway; UMP from orotate: step 2/2. Functionally, catalyzes the decarboxylation of orotidine 5'-monophosphate (OMP) to uridine 5'-monophosphate (UMP). This chain is Orotidine 5'-phosphate decarboxylase, found in Methanosarcina barkeri (strain Fusaro / DSM 804).